The chain runs to 753 residues: Dynein regulatory complex protein 1 (753 aa).

Disordered regions lie at residues 1-33 and 55-76; these read MNPSGTIGVLEQNGEEHLATPILGPSVHSDNPQ and LGEYLDGKKESEEEQSKSYKQK. The stretch at 100–388 forms a coiled coil; the sequence is AADVREIHRR…QFKDLQKALR (289 aa). The segment covering 587–597 has biased composition (polar residues); it reads SQTDKGSMVSK. Residues 587-628 are disordered; it reads SQTDKGSMVSKSDQEPTEQEDEQEGDNASLSSRELEEQEDLS. A compositionally biased stretch (acidic residues) spans 601–611; the sequence is EPTEQEDEQEG. Residues 703–739 are a coiled coil; the sequence is VLTERAKLLMENESLEQQNAEMQSLLQQYLQAKVNTE.

This sequence belongs to the DRC1 family. Component of the nexin-dynein regulatory complex (N-DRC). Interacts with CCDC65/DRC2, DRC3, GAS8/DRC4 and TCTE1/DRC5.

The protein localises to the cytoplasm. It localises to the cytoskeleton. The protein resides in the cilium axoneme. It is found in the flagellum axoneme. In terms of biological role, component of the nexin-dynein regulatory complex (N-DRC) a key regulator of ciliary/flagellar motility which maintains the alignment and integrity of the distal axoneme and regulates microtubule sliding in motile axonemes. Plays a critical role in the assembly of N-DRC and also stabilizes the assembly of multiple inner dynein arms and radial spokes. Coassembles with CCDC65/DRC2 to form a central scaffold needed for assembly of the N-DRC and its attachment to the outer doublet microtubules. This chain is Dynein regulatory complex protein 1 (Drc1), found in Mus musculus (Mouse).